Here is a 92-residue protein sequence, read N- to C-terminus: Nodulation protein F (92 aa).

In terms of domain architecture, Carrier spans 4–88 (QLTLEIISAI…DVVEAVRGLL (85 aa)). Serine 45 bears the O-(pantetheine 4'-phosphoryl)serine mark.

4'-phosphopantetheine is transferred from CoA to a specific serine of apo-NodF.

Proposed to synthesize nod factor fatty acyl chain. Involved in trans-2,trans-4,trans-6,cis-11-octadecatetraenoic acid biosynthesis. The polypeptide is Nodulation protein F (nodF) (Rhizobium leguminosarum bv. viciae).